Here is a 279-residue protein sequence, read N- to C-terminus: Biotin synthase (279 aa).

A Radical SAM core domain is found at 2 to 228; the sequence is KTIMLCAICS…ETRVMIAGGR (227 aa). [4Fe-4S] cluster contacts are provided by Cys-17, Cys-21, and Cys-24. Cys-61, Cys-96, Cys-154, and Arg-221 together coordinate [2Fe-2S] cluster.

Belongs to the radical SAM superfamily. Biotin synthase family. Homodimer. The cofactor is [4Fe-4S] cluster. It depends on [2Fe-2S] cluster as a cofactor.

The catalysed reaction is (4R,5S)-dethiobiotin + (sulfur carrier)-SH + 2 reduced [2Fe-2S]-[ferredoxin] + 2 S-adenosyl-L-methionine = (sulfur carrier)-H + biotin + 2 5'-deoxyadenosine + 2 L-methionine + 2 oxidized [2Fe-2S]-[ferredoxin]. It participates in cofactor biosynthesis; biotin biosynthesis; biotin from 7,8-diaminononanoate: step 2/2. In terms of biological role, catalyzes the conversion of dethiobiotin (DTB) to biotin by the insertion of a sulfur atom into dethiobiotin via a radical-based mechanism. This chain is Biotin synthase, found in Campylobacter concisus (strain 13826).